We begin with the raw amino-acid sequence, 737 residues long: Genome polyprotein (737 aa).

Ser-2 carries the post-translational modification N-acetylserine; by host. Residues 2–23 form an interaction with STAT1 region; the sequence is STNPKPQRKTKRNTNRRPQDVK. The segment at 2–58 is interaction with EIF2AK2/PKR; the sequence is STNPKPQRKTKRNTNRRPQDVKFPGGGQIVGGVYLLPRRGPRLGVRATRKTSERSQP. Positions 2-59 are interaction with DDX3X; that stretch reads STNPKPQRKTKRNTNRRPQDVKFPGGGQIVGGVYLLPRRGPRLGVRATRKTSERSQPR. The tract at residues 2 to 75 is disordered; it reads STNPKPQRKT…PKDRRSTGKS (74 aa). The Cytoplasmic segment spans residues 2–168; that stretch reads STNPKPQRKT…EDGINYATGN (167 aa). 2 short sequence motifs (nuclear localization signal) span residues 5 to 13 and 38 to 43; these read PKPQRKTKR and PRRGPR. Residues 7-16 show a composition bias toward basic residues; the sequence is PQRKTKRNTN. Low complexity predominate over residues 32-47; that stretch reads GGVYLLPRRGPRLGVR. The residue at position 53 (Ser-53) is a Phosphoserine; by host. 2 short sequence motifs (nuclear localization signal) span residues 58–64 and 66–71; these read PRGRRQP and PKDRRS. Phosphoserine; by host occurs at positions 99 and 116. Residues 112–152 are important for endoplasmic reticulum and mitochondrial localization; the sequence is PRHRSRNLGKVIDTLTCGFADLMGYIPVVGAPVGGVARALA. Residues 122-173 are interaction with APOA2; it reads VIDTLTCGFADLMGYIPVVGAPVGGVARALAHGVRVLEDGINYATGNLPGCS. An important for lipid droplets localization region spans residues 164-167; it reads YATG. Residues 169–189 form a helical membrane-spanning segment; that stretch reads LPGCSFSIFLLALLSCVTVPV. Residues 178 to 191 constitute a propeptide, ER anchor for the core protein, removed in mature form by host signal peptidase; that stretch reads LLALLSCVTVPVSA. Residues 190 to 358 lie on the Lumenal side of the membrane; the sequence is SAVEVRNISS…FGGHWGVVFG (169 aa). Residues Asn-196, Asn-209, and Asn-233 are each glycosylated (N-linked (GlcNAc...) asparagine; by host). The important for fusion stretch occupies residues 265–296; that stretch reads IVMAATVCSALYVGDICGAVMIASQAFIISPE. An N-linked (GlcNAc...) asparagine; by host glycan is attached at Asn-305. A helical membrane pass occupies residues 359 to 379; that stretch reads LAYFSMQGAWAKVIAILLLVA. Residues 380 to 729 lie on the Lumenal side of the membrane; sequence GVDASTQVTG…WEWVILLFLL (350 aa). The HVR1 stretch occupies residues 385 to 411; it reads TQVTGGQAAHTVRGVASIFSPGSRQDI. 4 N-linked (GlcNAc...) (high mannose) asparagine; by host glycosylation sites follow: Asn-417, Asn-423, Asn-430, and Asn-448. 4 disulfides stabilise this stretch: Cys-429–Cys-554, Cys-452–Cys-459, Cys-488–Cys-496, and Cys-505–Cys-510. Residues 474–481 are HVR2; that stretch reads YETNVTNE. The interval 482–495 is CD81-binding 1; it reads EDMRPYCWHYPPKP. Asn-542 carries an N-linked (GlcNAc...) asparagine; by host glycan. The interval 546 to 553 is CD81-binding 2; sequence PPRGAWFG. Asn-558 carries an N-linked (GlcNAc...) (high mannose) asparagine; by host glycan. 4 disulfides stabilise this stretch: Cys-566–Cys-571, Cys-585–Cys-589, Cys-601–Cys-624, and Cys-611–Cys-648. 2 N-linked (GlcNAc...) (high mannose) asparagine; by host glycosylation sites follow: Asn-627 and Asn-649. A disulfide bridge links Cys-656 with Cys-681. Positions 664–675 are PKR/eIF2-alpha phosphorylation homology domain (PePHD); the sequence is SQQSPLLHSTTE. Residues 730-737 traverse the membrane as a helical segment; sequence LADARVCA.

Belongs to the hepacivirus polyprotein family. In terms of assembly, homooligomer. Interacts with E1 (via C-terminus). Interacts with the non-structural protein 5A. Interacts (via N-terminus) with host STAT1 (via SH2 domain); this interaction results in decreased STAT1 phosphorylation and ubiquitin-mediated proteasome-dependent STAT1 degradation, leading to decreased IFN-stimulated gene transcription. Interacts with host STAT3; this interaction constitutively activates STAT3. Interacts with host LTBR receptor. Interacts with host TNFRSF1A receptor and possibly induces apoptosis. Interacts with host HNRPK. Interacts with host YWHAE. Interacts with host UBE3A/E6AP. Interacts with host DDX3X. Interacts with host APOA2. Interacts with host RXRA protein. Interacts with host SP110 isoform 3/Sp110b; this interaction sequesters the transcriptional corepressor SP110 away from the nucleus. Interacts with host CREB3 nuclear transcription protein; this interaction triggers cell transformation. Interacts with host ACY3. Interacts with host C1QR1. Interacts with host RBM24; this interaction, which enhances the interaction of the mature core protein with 5'-UTR, may inhibit viral translation and favor replication. Interacts with host EIF2AK2/PKR; this interaction induces the autophosphorylation of EIF2AK2. Part of the viral assembly initiation complex composed of NS2, E1, E2, NS3, NS4A, NS5A and the mature core protein. Forms a heterodimer with envelope glycoprotein E2. Interacts with mature core protein. Interacts with protease NS2. The heterodimer E1/E2 interacts with host CLDN1; this interaction plays a role in viral entry into host cell. Interacts with host SPSB2 (via C-terminus). Part of the viral assembly initiation complex composed of NS2, E1, E2, NS3, NS4A, NS5A and the mature core protein. As to quaternary structure, forms a heterodimer with envelope glycoprotein E1. Interacts with host CD81 and SCARB1 receptors; these interactions play a role in viral entry into host cell. Interacts with host EIF2AK2/PKR; this interaction inhibits EIF2AK2 and probably allows the virus to evade the innate immune response. Interacts with host CD209/DC-SIGN and CLEC4M/DC-SIGNR. Interact with host SPCS1; this interaction is essential for viral particle assembly. Interacts with protease NS2. The heterodimer E1/E2 interacts with host CLDN1; this interaction plays a role in viral entry into host cell. Part of the viral assembly initiation complex composed of NS2, E1, E2, NS3, NS4A, NS5A and the mature core protein. Post-translationally, specific enzymatic cleavages in vivo yield mature proteins. The structural proteins, core, E1, E2 and p7 are produced by proteolytic processing by host signal peptidases. The core protein precursor is synthesized as a 23 kDa, which is retained in the ER membrane through the hydrophobic signal peptide. Cleavage by the signal peptidase releases the 21 kDa mature core protein. The cleavage of the core protein precursor occurs between aminoacids 176 and 188 but the exact cleavage site is not known. Some degraded forms of the core protein appear as well during the course of infection. The other proteins (p7, NS2, NS3, NS4A, NS4B, NS5A and NS5B) are cleaved by the viral proteases. Autoprocessing between NS2 and NS3 is mediated by the NS2 cysteine protease catalytic domain and regulated by the NS3 N-terminal domain. In terms of processing, phosphorylated by host PKC and PKA. Ubiquitinated; mediated by UBE3A and leading to core protein subsequent proteasomal degradation. Post-translationally, highly N-glycosylated.

It is found in the host endoplasmic reticulum membrane. The protein resides in the host mitochondrion membrane. Its subcellular location is the virion. The protein localises to the host cytoplasm. It localises to the host nucleus. It is found in the host lipid droplet. The protein resides in the virion membrane. In terms of biological role, packages viral RNA to form a viral nucleocapsid, and promotes virion budding. Participates in the viral particle production as a result of its interaction with the non-structural protein 5A. Binds RNA and may function as a RNA chaperone to induce the RNA structural rearrangements taking place during virus replication. Modulates viral translation initiation by interacting with viral IRES and 40S ribosomal subunit. Affects various cell signaling pathways, host immunity and lipid metabolism. Prevents the establishment of cellular antiviral state by blocking the interferon-alpha/beta (IFN-alpha/beta) and IFN-gamma signaling pathways and by blocking the formation of phosphorylated STAT1 and promoting ubiquitin-mediated proteasome-dependent degradation of STAT1. Activates STAT3 leading to cellular transformation. Regulates the activity of cellular genes, including c-myc and c-fos. May repress the promoter of p53, and sequester CREB3 and SP110 isoform 3/Sp110b in the cytoplasm. Represses cell cycle negative regulating factor CDKN1A, thereby interrupting an important check point of normal cell cycle regulation. Targets transcription factors involved in the regulation of inflammatory responses and in the immune response: suppresses TNF-induced NF-kappa-B activation, and activates AP-1. Binds to dendritic cells (DCs) via C1QR1, resulting in down-regulation of T-lymphocytes proliferation. Alters lipid metabolism by interacting with hepatocellular proteins involved in lipid accumulation and storage. Induces up-regulation of FAS promoter activity, and thereby contributes to the increased triglyceride accumulation in hepatocytes (steatosis). Functionally, forms a heterodimer with envelope glycoprotein E2, which mediates virus attachment to the host cell, virion internalization through clathrin-dependent endocytosis and fusion with host membrane. Fusion with the host cell is most likely mediated by both E1 and E2, through conformational rearrangements of the heterodimer required for fusion rather than a classical class II fusion mechanism. E1/E2 heterodimer binds host apolipoproteins such as APOB and ApoE thereby forming a lipo-viro-particle (LVP). APOE associated to the LVP allows the initial virus attachment to cell surface receptors such as the heparan sulfate proteoglycans (HSPGs), syndecan-1 (SDC1), syndecan-1 (SDC2), the low-density lipoprotein receptor (LDLR) and scavenger receptor class B type I (SCARB1). The cholesterol transfer activity of SCARB1 allows E2 exposure and binding of E2 to SCARB1 and the tetraspanin CD81. E1/E2 heterodimer binding on CD81 activates the epithelial growth factor receptor (EGFR) signaling pathway. Diffusion of the complex E1-E2-EGFR-SCARB1-CD81 to the cell lateral membrane allows further interaction with Claudin 1 (CLDN1) and occludin (OCLN) to finally trigger HCV entry. Forms a heterodimer with envelope glycoprotein E1, which mediates virus attachment to the host cell, virion internalization through clathrin-dependent endocytosis and fusion with host membrane. Fusion with the host cell is most likely mediated by both E1 and E2, through conformational rearrangements of the heterodimer required for fusion rather than a classical class II fusion mechanism. The interaction between envelope glycoprotein E2 and host apolipoprotein E/APOE allows the proper assembly, maturation and infectivity of the viral particles. This interaction is probably promoted via the up-regulation of cellular autophagy by the virus. E1/E2 heterodimer binds host apolipoproteins such as APOB and APOE thereby forming a lipo-viro-particle (LVP). APOE associated to the LVP allows the initial virus attachment to cell surface receptors such as the heparan sulfate proteoglycans (HSPGs), syndecan-1 (SDC1), syndecan-1 (SDC2), the low-density lipoprotein receptor (LDLR) and scavenger receptor class B type I (SCARB1). The cholesterol transfer activity of SCARB1 allows E2 exposure and binding of E2 to SCARB1 and the tetraspanin CD81. E1/E2 heterodimer binding on CD81 activates the epithelial growth factor receptor (EGFR) signaling pathway. Diffusion of the complex E1-E2-EGFR-SCARB1-CD81 to the cell lateral membrane allows further interaction with Claudin 1 (CLDN1) and occludin (OCLN) to finally trigger HCV entry. Inhibits host EIF2AK2/PKR activation, preventing the establishment of an antiviral state. Viral ligand for CD209/DC-SIGN and CLEC4M/DC-SIGNR, which are respectively found on dendritic cells (DCs), and on liver sinusoidal endothelial cells and macrophage-like cells of lymph node sinuses. These interactions allow the capture of circulating HCV particles by these cells and subsequent facilitated transmission to permissive cells such as hepatocytes and lymphocyte subpopulations. This is Genome polyprotein from Hepatitis C virus (isolate HC-J7) (HCV).